The primary structure comprises 119 residues: Large ribosomal subunit protein uL18 (119 aa).

This sequence belongs to the universal ribosomal protein uL18 family. As to quaternary structure, part of the 50S ribosomal subunit; part of the 5S rRNA/L5/L18/L25 subcomplex. Contacts the 5S and 23S rRNAs.

In terms of biological role, this is one of the proteins that bind and probably mediate the attachment of the 5S RNA into the large ribosomal subunit, where it forms part of the central protuberance. The sequence is that of Large ribosomal subunit protein uL18 from Ruegeria sp. (strain TM1040) (Silicibacter sp.).